We begin with the raw amino-acid sequence, 168 residues long: Putative adenylate kinase (168 aa).

Residues Gly-10, Gly-12, Lys-13, Thr-14, and Thr-15 each contribute to the ATP site. Residues 28–51 (HLNERIREEGLDAGRDEERDSLVA) form an NMP region. An LID region spans residues 97 to 107 (DRGEPAAKAAE). Arg-98 is an ATP binding site.

Belongs to the adenylate kinase family. AK6 subfamily. Interacts with uS11. Not a structural component of 40S pre-ribosomes, but transiently interacts with them by binding to uS11.

The catalysed reaction is AMP + ATP = 2 ADP. It catalyses the reaction ATP + H2O = ADP + phosphate + H(+). In terms of biological role, broad-specificity nucleoside monophosphate (NMP) kinase that catalyzes the reversible transfer of the terminal phosphate group between nucleoside triphosphates and monophosphates. Also has ATPase activity. Involved in the late maturation steps of the 30S ribosomal particles, specifically 16S rRNA maturation. While NMP activity is not required for ribosome maturation, ATPase activity is. Associates transiently with small ribosomal subunit protein uS11. ATP hydrolysis breaks the interaction with uS11. May temporarily remove uS11 from the ribosome to enable a conformational change of the ribosomal RNA that is needed for the final maturation step of the small ribosomal subunit. This chain is Putative adenylate kinase, found in Natronomonas pharaonis (strain ATCC 35678 / DSM 2160 / CIP 103997 / JCM 8858 / NBRC 14720 / NCIMB 2260 / Gabara) (Halobacterium pharaonis).